A 1164-amino-acid polypeptide reads, in one-letter code: DNA-directed RNA polymerase 132 kDa polypeptide (1164 aa).

The protein belongs to the RNA polymerase beta chain family. The DNA-dependent RNA polymerase used for intermediate and late genes expression consists of eight subunits (147) kDa, (133) kDa, (35) kDa, (30) kDa, (22) kDa, (19) kDa, (18) kDa and (7) kDa totalling more than 500 kDa in mass. The same holoenzyme, with the addition of the transcription-specificity factor RAP94, is used for early gene expression.

It is found in the virion. The enzyme catalyses RNA(n) + a ribonucleoside 5'-triphosphate = RNA(n+1) + diphosphate. Part of the DNA-dependent RNA polymerase which catalyzes the transcription of viral DNA into RNA using the four ribonucleoside triphosphates as substrates. Responsible for the transcription of early, intermediate and late genes. DNA-dependent RNA polymerase associates with the early transcription factor (ETF), itself composed of D6 and A7, thereby allowing the early genes transcription. Late transcription, and probably also intermediate transcription, require newly synthesized RNA polymerase. This is DNA-directed RNA polymerase 132 kDa polypeptide (RPO132) from Oryctolagus cuniculus (Rabbit).